A 737-amino-acid polypeptide reads, in one-letter code: Alpha-adducin (737 aa).

The residue at position 1 (M1) is an N-acetylmethionine. The interval 1 to 21 is disordered; sequence MNGDSRAAVVTSPPPTTAPHK. S12 bears the Phosphoserine mark. Phosphoserine; by PKA is present on S59. Residue S64 is modified to Phosphoserine. T331 carries the post-translational modification Phosphothreonine. Phosphoserine is present on residues S334, S353, S355, S358, and S366. A Phosphoserine; by PKA modification is found at S408. Polar residues predominate over residues 419–430; sequence YSFTSDGDSGTC. Disordered stretches follow at residues 419–490 and 576–737; these read YSFT…NLFV and RREV…KSES. S427 carries the post-translational modification Phosphoserine. The residue at position 429 (T429) is a Phosphothreonine. Phosphoserine is present on S431. The residue at position 436 (S436) is a Phosphoserine; by PKA. The residue at position 445 (T445) is a Phosphothreonine; by ROCK2. S464 and S465 each carry phosphoserine. Residue T480 is modified to Phosphothreonine; by ROCK2. At S481 the chain carries Phosphoserine; by PKA. A compositionally biased stretch (basic and acidic residues) spans 576 to 601; sequence RREVERKQKGSEENLDEAREQKEKSP. Phosphoserine occurs at positions 586, 600, and 613. Residues 602–614 are compositionally biased toward pro residues; that stretch reads PDQPAVPYPPPST. Residue T614 is modified to Phosphothreonine. S678, S707, S710, and S714 each carry phosphoserine. Over residues 687 to 714 the composition is skewed to low complexity; it reads PVAEEAAPSAAEEGAAADPGSDGSPGKS. Residues 715–737 are compositionally biased toward basic residues; the sequence is PSKKKKKFRTPSFLKKSKKKSES. At S716 the chain carries Phosphoserine; by PKC. The interval 717-734 is interaction with calmodulin; sequence KKKKKFRTPSFLKKSKKK. S726 carries the phosphoserine; by PKA and PKC modification.

Belongs to the aldolase class II family. Adducin subfamily. Heterodimer of an alpha and a beta subunit or an alpha and a gamma subunit.

It is found in the cytoplasm. Its subcellular location is the cytoskeleton. The protein resides in the cell membrane. Membrane-cytoskeleton-associated protein that promotes the assembly of the spectrin-actin network. Binds to calmodulin. The polypeptide is Alpha-adducin (ADD1) (Pongo abelii (Sumatran orangutan)).